Reading from the N-terminus, the 410-residue chain is D-amino acid dehydrogenase (410 aa).

FAD is bound at residue 9–14 (GGGIVG).

This sequence belongs to the DadA oxidoreductase family. Requires FAD as cofactor.

Its subcellular location is the cell inner membrane. The catalysed reaction is a D-alpha-amino acid + a quinone + H2O = a 2-oxocarboxylate + a quinol + NH4(+). In terms of biological role, catalyzes the oxidative deamination of D-amino acids. Has broad substrate specificity; is mostly active on D-proline, and to a lesser extent, on several other D-amino acids such as D-alanine, D-phenylalanine and D-serine. Mediates electron transport from D-proline to coenzyme Q1 in vitro, and is involved in the electron transport chain from D-proline to the c-type cytochrome in vivo. The protein is D-amino acid dehydrogenase of Helicobacter pylori (strain ATCC 700392 / 26695) (Campylobacter pylori).